The chain runs to 368 residues: tRNA-specific 2-thiouridylase MnmA (368 aa).

ATP is bound by residues 12 to 19 (AMSGGVDS) and Met38. The active-site Nucleophile is the Cys110. An intrachain disulfide couples Cys110 to Cys207. Gly134 contacts ATP. The tract at residues 157–159 (KDQ) is interaction with tRNA. Cys207 acts as the Cysteine persulfide intermediate in catalysis. The segment at 312–313 (RY) is interaction with tRNA.

Belongs to the MnmA/TRMU family.

The protein localises to the cytoplasm. It catalyses the reaction S-sulfanyl-L-cysteinyl-[protein] + uridine(34) in tRNA + AH2 + ATP = 2-thiouridine(34) in tRNA + L-cysteinyl-[protein] + A + AMP + diphosphate + H(+). Catalyzes the 2-thiolation of uridine at the wobble position (U34) of tRNA, leading to the formation of s(2)U34. The polypeptide is tRNA-specific 2-thiouridylase MnmA (Geobacter metallireducens (strain ATCC 53774 / DSM 7210 / GS-15)).